Reading from the N-terminus, the 251-residue chain is Pyrroloquinoline-quinone synthase (251 aa).

Belongs to the PqqC family.

The catalysed reaction is 6-(2-amino-2-carboxyethyl)-7,8-dioxo-1,2,3,4,7,8-hexahydroquinoline-2,4-dicarboxylate + 3 O2 = pyrroloquinoline quinone + 2 H2O2 + 2 H2O + H(+). It functions in the pathway cofactor biosynthesis; pyrroloquinoline quinone biosynthesis. Ring cyclization and eight-electron oxidation of 3a-(2-amino-2-carboxyethyl)-4,5-dioxo-4,5,6,7,8,9-hexahydroquinoline-7,9-dicarboxylic-acid to PQQ. The polypeptide is Pyrroloquinoline-quinone synthase (Pseudomonas savastanoi pv. phaseolicola (strain 1448A / Race 6) (Pseudomonas syringae pv. phaseolicola (strain 1448A / Race 6))).